Here is a 641-residue protein sequence, read N- to C-terminus: Bifunctional protein glk (641 aa).

The interval 1 to 21 (MSTGAQTKAAEASQHADGPRL) is disordered. Residues 1-340 (MSTGAQTKAA…QLSNRTGGAS (340 aa)) form a glucokinase region. An ATP-binding site is contributed by 23–28 (ADVGGT). An HTH rpiR-type domain is found at 341–417 (SAVFERIRQM…LKLATGLTGT (77 aa)). The tract at residues 341–641 (SAVFERIRQM…SHGAAPAAKE (301 aa)) is putative HTH-type transcriptional regulator. Residues 377–396 (IVDIARKADVSQPTVIRFCR) constitute a DNA-binding region (H-T-H motif). The 140-residue stretch at 461–600 (AIDILNNARR…AVGVAIRRAS (140 aa)) folds into the SIS domain. The helical transmembrane segment at 576-596 (SMISRILHLVMIDILAVGVAI) threads the bilayer.

It in the N-terminal section; belongs to the bacterial glucokinase family.

The protein resides in the membrane. It carries out the reaction D-glucose + ATP = D-glucose 6-phosphate + ADP + H(+). This chain is Bifunctional protein glk (glk), found in Burkholderia thailandensis (strain ATCC 700388 / DSM 13276 / CCUG 48851 / CIP 106301 / E264).